The following is a 236-amino-acid chain: Phosphoribosylaminoimidazole-succinocarboxamide synthase (236 aa).

This sequence belongs to the SAICAR synthetase family.

It catalyses the reaction 5-amino-1-(5-phospho-D-ribosyl)imidazole-4-carboxylate + L-aspartate + ATP = (2S)-2-[5-amino-1-(5-phospho-beta-D-ribosyl)imidazole-4-carboxamido]succinate + ADP + phosphate + 2 H(+). It participates in purine metabolism; IMP biosynthesis via de novo pathway; 5-amino-1-(5-phospho-D-ribosyl)imidazole-4-carboxamide from 5-amino-1-(5-phospho-D-ribosyl)imidazole-4-carboxylate: step 1/2. The chain is Phosphoribosylaminoimidazole-succinocarboxamide synthase from Campylobacter jejuni subsp. jejuni serotype O:2 (strain ATCC 700819 / NCTC 11168).